The following is a 199-amino-acid chain: ATP-dependent Clp protease proteolytic subunit (199 aa).

Ser-97 acts as the Nucleophile in catalysis. The active site involves His-122.

It belongs to the peptidase S14 family. As to quaternary structure, fourteen ClpP subunits assemble into 2 heptameric rings which stack back to back to give a disk-like structure with a central cavity, resembling the structure of eukaryotic proteasomes.

It is found in the cytoplasm. The enzyme catalyses Hydrolysis of proteins to small peptides in the presence of ATP and magnesium. alpha-casein is the usual test substrate. In the absence of ATP, only oligopeptides shorter than five residues are hydrolyzed (such as succinyl-Leu-Tyr-|-NHMec, and Leu-Tyr-Leu-|-Tyr-Trp, in which cleavage of the -Tyr-|-Leu- and -Tyr-|-Trp bonds also occurs).. Its function is as follows. Cleaves peptides in various proteins in a process that requires ATP hydrolysis. Has a chymotrypsin-like activity. Plays a major role in the degradation of misfolded proteins. The protein is ATP-dependent Clp protease proteolytic subunit of Pelobacter propionicus (strain DSM 2379 / NBRC 103807 / OttBd1).